The chain runs to 230 residues: Alpha-S1-casein (230 aa).

The first 15 residues, methionine 1 to alanine 15, serve as a signal peptide directing secretion. A phosphoserine mark is found at serine 33, serine 83, serine 85, serine 86, serine 87, and serine 88. Positions aspartate 60–serine 83 are enriched in basic and acidic residues. Disordered regions lie at residues aspartate 60–lysine 103 and threonine 211–tryptophan 230. The span at glycine 84 to threonine 96 shows a compositional bias: low complexity.

It belongs to the alpha-casein family. Mammary gland specific. Secreted in milk.

It localises to the secreted. Its function is as follows. Important role in the capacity of milk to transport calcium phosphate. The sequence is that of Alpha-S1-casein (CSN1S1) from Camelus dromedarius (Dromedary).